Reading from the N-terminus, the 55-residue chain is Large ribosomal subunit protein bL33c (55 aa).

Belongs to the bacterial ribosomal protein bL33 family.

It localises to the plastid. Its subcellular location is the chloroplast. In Emiliania huxleyi (Coccolithophore), this protein is Large ribosomal subunit protein bL33c.